A 148-amino-acid chain; its full sequence is Transcriptional regulator MraZ (148 aa).

2 SpoVT-AbrB domains span residues Glu5–Glu53 and Ser82–Ala125.

The protein belongs to the MraZ family. In terms of assembly, forms oligomers.

It localises to the cytoplasm. Its subcellular location is the nucleoid. The protein is Transcriptional regulator MraZ of Xanthomonas oryzae pv. oryzae (strain MAFF 311018).